A 153-amino-acid polypeptide reads, in one-letter code: Ribonuclease H (153 aa).

Positions M1–N141 constitute an RNase H type-1 domain. Residues D9, E47, D69, and D133 each coordinate Mg(2+).

The protein belongs to the RNase H family. In terms of assembly, monomer. Requires Mg(2+) as cofactor.

Its subcellular location is the cytoplasm. The catalysed reaction is Endonucleolytic cleavage to 5'-phosphomonoester.. In terms of biological role, endonuclease that specifically degrades the RNA of RNA-DNA hybrids. The sequence is that of Ribonuclease H from Actinobacillus pleuropneumoniae serotype 5b (strain L20).